We begin with the raw amino-acid sequence, 978 residues long: Sensor histidine kinase TodS (978 aa).

Positions 32-103 (CEEHARIIFD…TQKRLVETAS (72 aa)) constitute a PAS 1 domain. Positions 108–162 (VRCDVEILGKSGGREVIAVDFSLLPICNEEGSIVYLLAEGRNITDKKKAEAMLAL) constitute a PAC 1 domain. One can recognise a Histidine kinase 1 domain in the interval 187-405 (KVSHELRTPL…LFQVKLPLNA (219 aa)). Histidine 190 is modified (phosphohistidine; by autocatalysis). The region spanning 452-567 (RVLIVEDNPD…ELRARVSNLV (116 aa)) is the Response regulatory domain. At aspartate 500 the chain carries 4-aspartylphosphate. The 71-residue stretch at 611–681 (SEARWKAVYE…QRLANLLQGG (71 aa)) folds into the PAS 2 domain. In terms of domain architecture, PAC 2 spans 685–737 (YSVERSYLCKNGSTIWANASVSLMPQRVGESPVILQIIDDITEKKQAQENLNQ). The Histidine kinase 2 domain maps to 757 to 974 (YIAHEINQPL…CFLVSIPARQ (218 aa)). At histidine 760 the chain carries Phosphohistidine.

Autophosphorylated. Activation requires a sequential transfer of a phosphate group from a His in the primary transmitter domain, to an Asp in the receiver domain and to a His in the secondary transmitter domain.

The protein localises to the cytoplasm. The enzyme catalyses ATP + protein L-histidine = ADP + protein N-phospho-L-histidine.. With respect to regulation, activity is regulated by agonists and antagonists. Binding of agonists such as toluene or benzene to TodS stimulates autophosphorylation at His-190. Activity is inhibited by antagonists such as o-xylene, o-chlorotoluene and trimethylbenzene isomers, which bind to TodS but do not stimulate autophosphorylation. Agonists and antagonists bind to the same PAS domain. In terms of biological role, member of the two-component regulatory system TodS/TodT involved in the regulation of toluene degradation. Phosphorylates TodT via a four-step phosphorelay in response to toluene. Can also be induced by benzene and ethylbenzene. This is Sensor histidine kinase TodS (todS) from Pseudomonas putida (strain DOT-T1E).